We begin with the raw amino-acid sequence, 142 residues long: UPF0102 protein Bamb_0202 (142 aa).

Residues 1-23 (MCHAAPAAPASGRGLPHGGGNFS) are disordered.

The protein belongs to the UPF0102 family.

This chain is UPF0102 protein Bamb_0202, found in Burkholderia ambifaria (strain ATCC BAA-244 / DSM 16087 / CCUG 44356 / LMG 19182 / AMMD) (Burkholderia cepacia (strain AMMD)).